The chain runs to 234 residues: 3-dehydroquinate dehydratase (234 aa).

Residues 33–35 and R68 each bind 3-dehydroquinate; that span reads EWR. Residue H124 is the Proton donor/acceptor of the active site. K151 acts as the Schiff-base intermediate with substrate in catalysis. Residues R193, S214, and Q218 each contribute to the 3-dehydroquinate site.

This sequence belongs to the type-I 3-dehydroquinase family. Homodimer.

It catalyses the reaction 3-dehydroquinate = 3-dehydroshikimate + H2O. It participates in metabolic intermediate biosynthesis; chorismate biosynthesis; chorismate from D-erythrose 4-phosphate and phosphoenolpyruvate: step 3/7. In terms of biological role, involved in the third step of the chorismate pathway, which leads to the biosynthesis of aromatic amino acids. Catalyzes the cis-dehydration of 3-dehydroquinate (DHQ) and introduces the first double bond of the aromatic ring to yield 3-dehydroshikimate. This Syntrophobacter fumaroxidans (strain DSM 10017 / MPOB) protein is 3-dehydroquinate dehydratase.